The chain runs to 290 residues: Pyridoxal kinase PdxY (290 aa).

Substrate contacts are provided by residues serine 12 and threonine 47–glutamine 48. ATP contacts are provided by residues aspartate 114, glutamate 151, lysine 184, and arginine 211 to leucine 214. Residue aspartate 225 participates in substrate binding.

The protein belongs to the pyridoxine kinase family. PdxY subfamily. In terms of assembly, homodimer. Requires Mg(2+) as cofactor.

It carries out the reaction pyridoxal + ATP = pyridoxal 5'-phosphate + ADP + H(+). It participates in cofactor metabolism; pyridoxal 5'-phosphate salvage; pyridoxal 5'-phosphate from pyridoxal: step 1/1. Its function is as follows. Pyridoxal kinase involved in the salvage pathway of pyridoxal 5'-phosphate (PLP). Catalyzes the phosphorylation of pyridoxal to PLP. The chain is Pyridoxal kinase PdxY from Pseudomonas entomophila (strain L48).